Consider the following 296-residue polypeptide: Ribosome biogenesis GTPase A (296 aa).

A CP-type G domain is found at 14-178; that stretch reads RRQVTEKLKL…LLDTPGILWP (165 aa). GTP is bound by residues 58-61, 130-135, and Gly174; these read NKAD and NVGKST.

Belongs to the TRAFAC class YlqF/YawG GTPase family. MTG1 subfamily. Interacts with ctc. Interacts with the immature 50S ribosome subunit. 2 molecules of rbgA bind to one 50S subunit.

The protein resides in the cytoplasm. Functionally, essential protein that is required for a late step of 50S ribosomal subunit assembly. Has GTPase activity that is stimulated by interaction with the immature 50S ribosome subunit. Binds to the 23S rRNA. Required for the association of ribosomal proteins rplP and rpmA with the large subunit. This Bacillus cereus (strain ATCC 14579 / DSM 31 / CCUG 7414 / JCM 2152 / NBRC 15305 / NCIMB 9373 / NCTC 2599 / NRRL B-3711) protein is Ribosome biogenesis GTPase A.